The sequence spans 405 residues: Cytoplasmic tRNA 2-thiolation protein 2 (405 aa).

Belongs to the CTU2/NCS2 family.

It is found in the cytoplasm. The protein operates within tRNA modification; 5-methoxycarbonylmethyl-2-thiouridine-tRNA biosynthesis. In terms of biological role, plays a central role in 2-thiolation of mcm(5)S(2)U at tRNA wobble positions of tRNA(Lys), tRNA(Glu) and tRNA(Gln). May act by forming a heterodimer with NCS6/CTU1 that ligates sulfur from thiocarboxylated URM1 onto the uridine of tRNAs at wobble position. The protein is Cytoplasmic tRNA 2-thiolation protein 2 of Drosophila persimilis (Fruit fly).